Consider the following 522-residue polypeptide: Kelch domain-containing protein 4 (522 aa).

Residues 1–10 (MGKKGKKEKK) show a composition bias toward basic residues. The interval 1 to 33 (MGKKGKKEKKGRGAEKTAAKMEKKVSKRSRKEE) is disordered. Over residues 11 to 24 (GRGAEKTAAKMEKK) the composition is skewed to basic and acidic residues. 5 Kelch repeats span residues 77-129 (ELIL…VVPQ), 133-187 (QLWV…AWKR), 188-241 (QLIL…VTPQ), 243-289 (GIII…MNPS), and 308-361 (QTLF…RRGR). Disordered regions lie at residues 346–378 (QLKGPKSEKKKRRRGRKEESEGGSKLACGGAGT), 402–432 (LAAPGSAGQPRSEDEDSPEEAGSSAPGPCPR), and 481–522 (DPET…GAED). Phosphoserine is present on residues serine 413 and serine 418. A Kelch 6 repeat occupies 443–494 (VLYVYGGMFEAGDRQVTLSDLHCLDLHRMEAWKALVEMDPETQEWLEETDSE).

This Pongo abelii (Sumatran orangutan) protein is Kelch domain-containing protein 4 (KLHDC4).